A 196-amino-acid polypeptide reads, in one-letter code: Probable signal peptidase I-1 (196 aa).

Residues 1–16 lie on the Cytoplasmic side of the membrane; that stretch reads MQNSPIPSPWQFIKEN. Residues 17 to 35 form a helical membrane-spanning segment; that stretch reads IPLLMVALVLALLLRFFVA. Topologically, residues 36–196 are periplasmic; sequence EPRYIPSDSM…FVPARTIINT (161 aa). Active-site residues include Ser-44 and Lys-94.

Belongs to the peptidase S26 family.

The protein localises to the cell membrane. The enzyme catalyses Cleavage of hydrophobic, N-terminal signal or leader sequences from secreted and periplasmic proteins.. The polypeptide is Probable signal peptidase I-1 (lepB1) (Synechocystis sp. (strain ATCC 27184 / PCC 6803 / Kazusa)).